Here is a 511-residue protein sequence, read N- to C-terminus: MANTKHIIIVGAGPGGLCAGMLLSQRGFKVSIFDKHAEIGGRNRPINMNGFTFDTGPTFLLMKGVLDEMFELCERRSEDYLEFLPLSPMYRLLYDDRDIFVYSDRENMRAELQRVFDEGTDGYEQFMEQERKRFNALYPCITRDYSSLKSFLSLDLIKALPWLAFPKSVFNNLGQYFNQEKMRLAFCFQSKYLGMSPWECPALFTMLPYLEHEYGIYHVKGGLNRIAAAMAQVIAENGGEIHLNSEIESLIIENGAAKGVKLQHGAELRGDEVIINADFAHAMTHLVKPGVLKKYTPENLKQREYSCSTFMLYLGLDKIYDLPHHTIVFAKDYTTNIRNIFDNKTLTDDFSFYVQNASASDDSLAPAGKSALYVLVPMPNNDSGLDWQAHCQNVREQVLDTLGARLGLSDIRAHIECEKIITPQTWETDEHVYKGATFSLSHKFSQMLYWRPHNRFEELANCYLVGGGTHPGSGLPTIYESARISAKLISQKHRVRFKDIAHSAWLKKAKA.

It belongs to the carotenoid/retinoid oxidoreductase family.

It carries out the reaction 15-cis-4,4'-diapophytoene + 4 FAD + 4 H(+) = all-trans-4,4'-diapolycopene + 4 FADH2. Its pathway is carotenoid biosynthesis. In terms of biological role, involved in the biosynthesis of C30 carotenoids. Catalyzes four successive dehydrogenation reactions that lead to the introduction of four double bonds into 4,4'-diapophytoene (dehydrosqualene) to yield 4,4'-diapolycopene. In Methylomonas sp, this protein is 4,4'-diapophytoene desaturase (4,4'-diapolycopene-forming).